A 424-amino-acid polypeptide reads, in one-letter code: Serine--tRNA ligase (424 aa).

L-serine is bound at residue 230 to 232 (TAE). Residue 261–263 (RSE) participates in ATP binding. Glu284 serves as a coordination point for L-serine. An ATP-binding site is contributed by 348–351 (EISS). Residue Ser384 coordinates L-serine.

Belongs to the class-II aminoacyl-tRNA synthetase family. Type-1 seryl-tRNA synthetase subfamily. In terms of assembly, homodimer. The tRNA molecule binds across the dimer.

It is found in the cytoplasm. It catalyses the reaction tRNA(Ser) + L-serine + ATP = L-seryl-tRNA(Ser) + AMP + diphosphate + H(+). The enzyme catalyses tRNA(Sec) + L-serine + ATP = L-seryl-tRNA(Sec) + AMP + diphosphate + H(+). The protein operates within aminoacyl-tRNA biosynthesis; selenocysteinyl-tRNA(Sec) biosynthesis; L-seryl-tRNA(Sec) from L-serine and tRNA(Sec): step 1/1. Catalyzes the attachment of serine to tRNA(Ser). Is also able to aminoacylate tRNA(Sec) with serine, to form the misacylated tRNA L-seryl-tRNA(Sec), which will be further converted into selenocysteinyl-tRNA(Sec). The polypeptide is Serine--tRNA ligase (Streptococcus pneumoniae (strain JJA)).